The following is a 150-amino-acid chain: SsrA-binding protein (150 aa).

Belongs to the SmpB family.

The protein localises to the cytoplasm. Its function is as follows. Required for rescue of stalled ribosomes mediated by trans-translation. Binds to transfer-messenger RNA (tmRNA), required for stable association of tmRNA with ribosomes. tmRNA and SmpB together mimic tRNA shape, replacing the anticodon stem-loop with SmpB. tmRNA is encoded by the ssrA gene; the 2 termini fold to resemble tRNA(Ala) and it encodes a 'tag peptide', a short internal open reading frame. During trans-translation Ala-aminoacylated tmRNA acts like a tRNA, entering the A-site of stalled ribosomes, displacing the stalled mRNA. The ribosome then switches to translate the ORF on the tmRNA; the nascent peptide is terminated with the 'tag peptide' encoded by the tmRNA and targeted for degradation. The ribosome is freed to recommence translation, which seems to be the essential function of trans-translation. This Polynucleobacter asymbioticus (strain DSM 18221 / CIP 109841 / QLW-P1DMWA-1) (Polynucleobacter necessarius subsp. asymbioticus) protein is SsrA-binding protein.